The following is a 1281-amino-acid chain: Zinc finger transcription factor Trps1 (1281 aa).

Disordered stretches follow at residues M1–P101 and P116–L204. 2 stretches are compositionally biased toward polar residues: residues L21–S31 and D40–S49. K29 is covalently cross-linked (Glycyl lysine isopeptide (Lys-Gly) (interchain with G-Cter in SUMO2)). Phosphoserine occurs at positions 90 and 127. Over residues L148–E162 the composition is skewed to basic and acidic residues. Residues P166–V189 are compositionally biased toward polar residues. A phosphoserine mark is found at S178 and S216. The C2H2-type 1; atypical zinc-finger motif lies at F222–H247. K263 is covalently cross-linked (Glycyl lysine isopeptide (Lys-Gly) (interchain with G-Cter in SUMO2)). A C2H2-type 2; atypical zinc finger spans residues F333–H358. The interval S365–D393 is disordered. Residues K418, K457, K474, and K488 each participate in a glycyl lysine isopeptide (Lys-Gly) (interchain with G-Cter in SUMO2) cross-link. The disordered stretch occupies residues N484 to A515. Residues K488–A515 are compositionally biased toward basic and acidic residues. A C2H2-type 3; atypical zinc finger spans residues H614–H637. Residues T635–S819 form a mediates interaction with GLI3 region. A Glycyl lysine isopeptide (Lys-Gly) (interchain with G-Cter in SUMO2) cross-link involves residue K645. 2 C2H2-type zinc fingers span residues H666–H689 and Y692–H715. Residues K737 and K755 each participate in a glycyl lysine isopeptide (Lys-Gly) (interchain with G-Cter in SUMO2) cross-link. K766 is covalently cross-linked (Glycyl lysine isopeptide (Lys-Gly) (interchain with G-Cter in SUMO1); alternate). K766 participates in a covalent cross-link: Glycyl lysine isopeptide (Lys-Gly) (interchain with G-Cter in SUMO2); alternate. Glycyl lysine isopeptide (Lys-Gly) (interchain with G-Cter in SUMO2) cross-links involve residues K825 and K850. The tract at residues A856 to L885 is disordered. Residues K862–P871 show a composition bias toward polar residues. Residues K877 and K879 each participate in a glycyl lysine isopeptide (Lys-Gly) (interchain with G-Cter in SUMO2) cross-link. The GATA-type zinc finger occupies C896–C920. Residues K925, K937, and K965 each participate in a glycyl lysine isopeptide (Lys-Gly) (interchain with G-Cter in SUMO2) cross-link. Over residues E961–G977 the composition is skewed to polar residues. Residues E961–S1000 are disordered. S978 carries the post-translational modification Phosphoserine. Positions L980–E995 are enriched in basic and acidic residues. The mediates interaction with RNF4 stretch occupies residues E985–K1184. Glycyl lysine isopeptide (Lys-Gly) (interchain with G-Cter in SUMO2) cross-links involve residues K1003, K1012, K1030, and K1040. Residues K1040 to P1049 show a composition bias toward polar residues. The segment at K1040 to P1078 is disordered. S1041 carries the phosphoserine modification. The segment covering G1050–K1059 has biased composition (low complexity). Basic and acidic residues predominate over residues G1060–M1072. S1066 bears the Phosphoserine mark. K1070 is covalently cross-linked (Glycyl lysine isopeptide (Lys-Gly) (interchain with G-Cter in SUMO2)). At S1085 the chain carries Phosphoserine. The segment at P1163 to E1281 is transcriptional repressor domain. Positions K1169–D1195 are disordered. Residues K1192 and K1201 each participate in a glycyl lysine isopeptide (Lys-Gly) (interchain with G-Cter in SUMO2); alternate cross-link. Residues K1192 and K1201 each participate in a glycyl lysine isopeptide (Lys-Gly) (interchain with G-Cter in SUMO); alternate cross-link. K1201 is covalently cross-linked (Glycyl lysine isopeptide (Lys-Gly) (interchain with G-Cter in SUMO1); alternate). 2 consecutive C2H2-type zinc fingers follow at residues T1215–H1237 and F1243–H1267.

As to quaternary structure, interacts with RNF4; regulates TRPS1 repressor activity. Interacts specifically with the activator form of GLI3 (GLI3A) but not with the repressor form (GLI3R). Post-translationally, sumoylated. Sumoylation in the repressor domain inhibits the transcription repression activity. Sumoylation on Lys-1201 is the major site. Appears to be sumoylated on multiple sites. In the embryo, expression is detected in both visceral and skeletal tissues. Found in the maxilla, mandible, snout, prospective phalanges and in the femoral head within the developing hip. Also expressed in the hair follicles.

It localises to the nucleus. In terms of biological role, transcriptional repressor. Binds specifically to GATA sequences and represses expression of GATA-regulated genes at selected sites and stages in vertebrate development. Regulates chondrocyte proliferation and differentiation. Executes multiple functions in proliferating chondrocytes, expanding the region of distal chondrocytes, activating proliferation in columnar cells and supporting the differentiation of columnar into hypertrophic chondrocytes. This is Zinc finger transcription factor Trps1 (Trps1) from Mus musculus (Mouse).